The chain runs to 479 residues: Ribosomal RNA small subunit methyltransferase F (479 aa).

S-adenosyl-L-methionine contacts are provided by residues Ala125 to Lys131, Glu149, Asp176, and Asp194. Cys247 serves as the catalytic Nucleophile.

Belongs to the class I-like SAM-binding methyltransferase superfamily. RsmB/NOP family.

The protein resides in the cytoplasm. It carries out the reaction cytidine(1407) in 16S rRNA + S-adenosyl-L-methionine = 5-methylcytidine(1407) in 16S rRNA + S-adenosyl-L-homocysteine + H(+). Functionally, specifically methylates the cytosine at position 1407 (m5C1407) of 16S rRNA. In Escherichia coli O157:H7 (strain EC4115 / EHEC), this protein is Ribosomal RNA small subunit methyltransferase F.